Here is a 403-residue protein sequence, read N- to C-terminus: Para-nitrophenol 4-monooxygenase (403 aa).

FAD-binding positions include 6-35 (GVVV…VLEA) and 279-289 (FRRGRVVLAGD).

It belongs to the PheA/TfdB FAD monooxygenase family. Monomer. It depends on FAD as a cofactor.

The enzyme catalyses 4-nitrophenol + NADPH + O2 + H(+) = 1,4-benzoquinone + nitrite + NADP(+) + H2O. Its pathway is xenobiotic degradation; 4-nitrophenol degradation. Involved in the degradation of para-nitrophenol (4-NP). Catalyzes oxidation of 4-nitrophenol (4-NP) at position 4 with concomitant removal of the nitro group as nitrite and production of para-benzoquinone. In Pseudomonas sp. (strain WBC-3), this protein is Para-nitrophenol 4-monooxygenase (pnpA).